Here is a 109-residue protein sequence, read N- to C-terminus: Sperm-specific class P protein 10 (109 aa).

In terms of domain architecture, MSP spans 2-109; the sequence is SLTADPPACT…TVTIPMSATA (108 aa).

In terms of tissue distribution, expressed at higher level in testis.

The protein is Sperm-specific class P protein 10 (ssp-10) of Caenorhabditis elegans.